The chain runs to 613 residues: Laccase 1 (613 aa).

An N-terminal signal peptide occupies residues 1 to 20; it reads MSRFARLLLIVALFFTGAWA. 2 consecutive Plastocyanin-like domains span residues 29-142 and 171-359; these read ITWK…IRPK and YLVV…MRIP. Asn74 carries N-linked (GlcNAc...) asparagine glycosylation. Residues His78, His80, His122, and His124 each coordinate Cu cation. 5 N-linked (GlcNAc...) asparagine glycosylation sites follow: Asn256, Asn279, Asn444, Asn468, and Asn484. In terms of domain architecture, Plastocyanin-like 3 spans 468-598; it reads NATRDTENDG…GGMGIAILDG (131 aa). Residues His506, His509, and His511 each coordinate Cu cation. N-linked (GlcNAc...) asparagine glycosylation is present at Asn526. The Cu cation site is built by His580, Cys581, His582, and His586.

Belongs to the multicopper oxidase family. Cu cation is required as a cofactor.

The protein localises to the cell surface. It participates in pigment biosynthesis. Laccase; part of the Pks1 gene cluster that mediates the biosynthesis of an anthraquinone derivative pigment that contributes to conidial pigmentation that provides protection from UV radiation, heat and cold stress. The polyketide synthase Pks1 produces 1-acetyl-2,4,6,8-tetrahydroxy-9,10-anthraquinone though condensation of acetyl-CoA with malonyl-CoA. The dehydratase EthD and the laccase Mlac1 further convert the anthraquinone derivative into the final conidial pigment. This chain is Laccase 1, found in Metarhizium guizhouense (strain ARSEF 977).